The chain runs to 76 residues: UPF0346 protein lhv_1069 (76 aa).

This sequence belongs to the UPF0346 family.

In Lactobacillus helveticus (strain DPC 4571), this protein is UPF0346 protein lhv_1069.